A 707-amino-acid polypeptide reads, in one-letter code: Choline transporter-like protein 4 (707 aa).

Residues M1–D32 lie on the Cytoplasmic side of the membrane. Residues I33–A53 form a helical membrane-spanning segment. Residues W54 to W226 are Extracellular-facing. N-linked (GlcNAc...) asparagine glycosylation is found at N67, N142, N184, and N195. Residues Y227–L247 traverse the membrane as a helical segment. Over R248–L249 the chain is Cytoplasmic. Residues V250–I270 form a helical membrane-spanning segment. Residues Y271–W306 are Extracellular-facing. An N-linked (GlcNAc...) asparagine glycan is attached at N295. A helical transmembrane segment spans residues L307–L327. Residues R328 to P355 lie on the Cytoplasmic side of the membrane. Residues L356–L376 form a helical membrane-spanning segment. Residues A377–N452 lie on the Extracellular side of the membrane. N-linked (GlcNAc...) asparagine glycans are attached at residues N390, N402, and N413. A helical membrane pass occupies residues W453–F473. At H474 to S498 the chain is on the cytoplasmic side. The helical transmembrane segment at L499–I519 threads the bilayer. Residues D520 to Y557 lie on the Extracellular side of the membrane. Residues I558–L578 traverse the membrane as a helical segment. The Cytoplasmic portion of the chain corresponds to M579–L594. The chain crosses the membrane as a helical span at residues L595–F615. At T616 to W635 the chain is on the extracellular side. A helical membrane pass occupies residues L636–F656. Topologically, residues G657–K707 are cytoplasmic.

This sequence belongs to the CTL (choline transporter-like) family. N-glycosylated; N-glycosylation of Asn-677 and Asn-390 is required for a proper thiamine pyrophosphate uptake.

It localises to the membrane. The protein localises to the apical cell membrane. The catalysed reaction is choline(out) + n H(+)(in) = choline(in) + n H(+)(out). It catalyses the reaction thiamine diphosphate(out) = thiamine diphosphate(in). Functionally, choline transporter that plays a role in the choline-acetylcholine system and is required to the efferent innervation of hair cells in the olivocochlear bundle for the maintenance of physiological function of outer hair cells and the protection of hair cells from acoustic injury. Also described as a thiamine pyrophosphate transporter in colon, may mediate the absorption of microbiota-generated thiamine pyrophosphate and contribute to host thiamine (vitamin B1) homeostasis. The polypeptide is Choline transporter-like protein 4 (Sus scrofa (Pig)).